A 169-amino-acid polypeptide reads, in one-letter code: Pyrophosphate-energized proton pump 1 (169 aa).

3 helical membrane passes run 45–65 (YVVA…GIAM), 114–134 (VIPS…VLLI), and 141–161 (AFAA…LVAI).

The protein belongs to the H(+)-translocating pyrophosphatase (TC 3.A.10) family. As to quaternary structure, homodimer. Mg(2+) serves as cofactor.

Its subcellular location is the cell inner membrane. The enzyme catalyses diphosphate + H2O + H(+)(in) = 2 phosphate + 2 H(+)(out). Proton pump that utilizes the energy of pyrophosphate hydrolysis as the driving force for proton movement across the membrane. Generates a proton motive force. This chain is Pyrophosphate-energized proton pump 1 (hppA1), found in Rhizobium leguminosarum bv. trifolii.